Here is a 171-residue protein sequence, read N- to C-terminus: Protein-export protein SecB (171 aa).

It belongs to the SecB family. Homotetramer, a dimer of dimers. One homotetramer interacts with 1 SecA dimer.

The protein localises to the cytoplasm. One of the proteins required for the normal export of preproteins out of the cell cytoplasm. It is a molecular chaperone that binds to a subset of precursor proteins, maintaining them in a translocation-competent state. It also specifically binds to its receptor SecA. The chain is Protein-export protein SecB from Xanthomonas oryzae pv. oryzae (strain MAFF 311018).